The primary structure comprises 515 residues: RNA-binding region-containing protein 3 (515 aa).

The disordered stretch occupies residues M1–D26. At S21 the chain carries Phosphoserine. The RRM 1 domain occupies R27–E102. 3 disordered regions span residues H107–E133, L215–R254, and E337–N369. Phosphoserine is present on S108. Basic and acidic residues predominate over residues A115–E133. The span at P218–P230 shows a compositional bias: pro residues. The span at E337–D348 shows a compositional bias: basic and acidic residues. S349 bears the Phosphoserine mark. Residues C419–S502 form the RRM 2 domain.

As to quaternary structure, component of the U11/U12 snRNPs that are part of the U12-type spliceosome. Found in a complex with m(7)G-capped U12 snRNA. Interacts with PDCD7.

Its subcellular location is the nucleus. Functionally, participates in pre-mRNA U12-dependent splicing, performed by the minor spliceosome which removes U12-type introns. U12-type introns comprises less than 1% of all non-coding sequences. Binds to the 3'-stem-loop of m(7)G-capped U12 snRNA. This is RNA-binding region-containing protein 3 (Rnpc3) from Rattus norvegicus (Rat).